The sequence spans 468 residues: Adenylosuccinate synthetase (468 aa).

Residues 23–29 (GDEGKGK) and 51–53 (GHE) each bind GTP. Catalysis depends on D24, which acts as the Proton acceptor. The Mg(2+) site is built by D24 and G51. Residues 24–27 (DEGK), 49–52 (NSGH), T142, R156, N238, T253, and R317 contribute to the IMP site. The Proton donor role is filled by H52. 313–319 (VTTGRTR) is a substrate binding site. GTP contacts are provided by residues R319 and 345-347 (KLD).

It belongs to the adenylosuccinate synthetase family. Homodimer. The cofactor is Mg(2+).

Its subcellular location is the cytoplasm. The catalysed reaction is IMP + L-aspartate + GTP = N(6)-(1,2-dicarboxyethyl)-AMP + GDP + phosphate + 2 H(+). It participates in purine metabolism; AMP biosynthesis via de novo pathway; AMP from IMP: step 1/2. Functionally, plays an important role in the salvage pathway for purine nucleotide biosynthesis. Catalyzes the first committed step in the biosynthesis of AMP from IMP. The polypeptide is Adenylosuccinate synthetase (Theileria annulata).